Reading from the N-terminus, the 215-residue chain is Large ribosomal subunit protein uL3 (215 aa).

Position 156 is an N5-methylglutamine (Q156).

Belongs to the universal ribosomal protein uL3 family. In terms of assembly, part of the 50S ribosomal subunit. Forms a cluster with proteins L14 and L19. Post-translationally, methylated by PrmB.

Its function is as follows. One of the primary rRNA binding proteins, it binds directly near the 3'-end of the 23S rRNA, where it nucleates assembly of the 50S subunit. The sequence is that of Large ribosomal subunit protein uL3 from Xylella fastidiosa (strain 9a5c).